Here is a 372-residue protein sequence, read N- to C-terminus: Tribbles homolog 1 (372 aa).

Disordered regions lie at residues 1-23 (MRVGPVRSAMSGASQPRGPALLF) and 52-86 (ECSSPPDYLSPPGSPCSPQPPPAAPGAGGGSGSAP). Residues 59-75 (YLSPPGSPCSPQPPPAA) show a composition bias toward pro residues. The 248-residue stretch at 91 to 338 (IADYLLLPLA…APEILLHPWF (248 aa)) folds into the Protein kinase domain. Residues 355–360 (DQIVPE) carry the COP1-binding motif.

It belongs to the protein kinase superfamily. CAMK Ser/Thr protein kinase family. Tribbles subfamily. In terms of assembly, monomer. Interacts (via protein kinase domain) with CEBPA. Interacts with COP1. Expressed in most human tissues with the highest levels in skeletal muscle, thyroid gland, pancreas, peripheral blood leukocytes, and bone marrow.

Functionally, adapter protein involved in protein degradation by interacting with COP1 ubiquitin ligase. The COP1-binding motif is masked by autoinhibitory interactions with the protein kinase domain. Serves to alter COP1 substrate specificity by directing the activity of COP1 toward CEBPA. Binds selectively the recognition sequence of CEBPA. Regulates myeloid cell differentiation by altering the expression of CEBPA in a COP1-dependent manner. Controls macrophage, eosinophil and neutrophil differentiation via the COP1-binding domain. Interacts with MAPK kinases and regulates activation of MAP kinases, but has no kinase activity. This chain is Tribbles homolog 1, found in Homo sapiens (Human).